Here is a 339-residue protein sequence, read N- to C-terminus: UPF0324 membrane protein SpyM3_0740 (339 aa).

The next 9 membrane-spanning stretches (helical) occupy residues 7–24 (KLPG…AWYL), 28–50 (FPII…FYHH), 57–79 (GISF…GLNL), 84–106 (AVGM…VAYG), 118–140 (ATLV…APVI), 150–172 (AISV…GQLL), 256–275 (FILF…SLGV), 290–307 (FIVM…LVKL), and 314–336 (AILL…QLSL).

The protein belongs to the UPF0324 family.

The protein resides in the cell membrane. In Streptococcus pyogenes serotype M3 (strain ATCC BAA-595 / MGAS315), this protein is UPF0324 membrane protein SpyM3_0740.